A 100-amino-acid chain; its full sequence is Large ribosomal subunit protein uL23 (100 aa).

The protein belongs to the universal ribosomal protein uL23 family. As to quaternary structure, part of the 50S ribosomal subunit. Contacts protein L29, and trigger factor when it is bound to the ribosome.

In terms of biological role, one of the early assembly proteins it binds 23S rRNA. One of the proteins that surrounds the polypeptide exit tunnel on the outside of the ribosome. Forms the main docking site for trigger factor binding to the ribosome. The sequence is that of Large ribosomal subunit protein uL23 from Shewanella pealeana (strain ATCC 700345 / ANG-SQ1).